The sequence spans 122 residues: Antitoxin protein TsiV3 (122 aa).

Positions 1-24 (MNNLLSAYVTMLLILLSISGGAIA) are cleaved as a signal peptide. Disulfide bonds link Cys-28-Cys-41 and Cys-82-Cys-100.

Homodimer; dimerization is critical for inhibitory activity. Forms a heterotetramer with VgrG3 composed of one TsiV3 homodimer and two VgrG3 molecules.

Its function is as follows. Immunity protein that plays a role in preventing early activation of toxin VgrG3. This chain is Antitoxin protein TsiV3, found in Vibrio cholerae serotype O1 (strain ATCC 39315 / El Tor Inaba N16961).